A 394-amino-acid polypeptide reads, in one-letter code: Choline/ethanolamine kinase (394 aa).

An N-acetylalanine modification is found at Ala2. The disordered stretch occupies residues 22–42 (GLLDAKCPEPIPNRRRSSSLS). ATP is bound by residues 75-81 (SGGLSNL), Arg104, 146-152 (QYLPSRP), Gln244, and Asp264. 77–79 (GLS) is a binding site for substrate.

Belongs to the choline/ethanolamine kinase family. In terms of assembly, homodimer, and heterodimer with CHKA.

It catalyses the reaction choline + ATP = phosphocholine + ADP + H(+). The catalysed reaction is ethanolamine + ATP = phosphoethanolamine + ADP + H(+). Its pathway is phospholipid metabolism; phosphatidylethanolamine biosynthesis; phosphatidylethanolamine from ethanolamine: step 1/3. In terms of biological role, has a key role in phospholipid metabolism, and catalyzes the first step of phosphatidylethanolamine and phosphatidylcholine biosynthesis. In Rattus norvegicus (Rat), this protein is Choline/ethanolamine kinase (Chkb).